Reading from the N-terminus, the 21-residue chain is CSCADMTDKECLYFCHQDVIW.

2 cysteine pairs are disulfide-bonded: cysteine 1–cysteine 15 and cysteine 3–cysteine 11.

Belongs to the endothelin/sarafotoxin family. In terms of tissue distribution, expressed by the venom gland.

The protein resides in the secreted. Functionally, vasoconstrictor activity. These toxins cause cardiac arrest probably as a result of coronary vasospasm. May act by displaying agonistic activities towards endothelin-1 and -2 receptors (EDNRA and EDNRB). The sequence is that of Bibrotoxin from Atractaspis bibronii (Bibron's mole viper).